The sequence spans 172 residues: RNA silencing suppressor p19 (172 aa).

A compositionally biased stretch (basic and acidic residues) spans 1 to 20; it reads MERAIQGNDTREQANGERWD. The segment at 1–27 is disordered; sequence MERAIQGNDTREQANGERWDGGSGGIT.

The protein belongs to the tombusvirus protein p19 family. Homodimer.

Functionally, acts as a suppressor of RNA-mediated gene silencing, also known as post-transcriptional gene silencing (PTGS), a mechanism of plant viral defense that limits the accumulation of viral RNAs. Binds to short interfering RNAs (siRNAs) with high affinity. Acts as a molecular caliper to specifically select siRNAs based on the length of the duplex region of the RNA. The polypeptide is RNA silencing suppressor p19 (Dianthus caryophyllus (Carnation)).